Reading from the N-terminus, the 115-residue chain is Iron-sulfur cluster insertion protein ErpA (115 aa).

Iron-sulfur cluster-binding residues include Cys42, Cys106, and Cys108.

This sequence belongs to the HesB/IscA family. As to quaternary structure, homodimer. The cofactor is iron-sulfur cluster.

In terms of biological role, required for insertion of 4Fe-4S clusters for at least IspG. In Baumannia cicadellinicola subsp. Homalodisca coagulata, this protein is Iron-sulfur cluster insertion protein ErpA.